Here is a 118-residue protein sequence, read N- to C-terminus: MAVVGVGVDVVDVDRFAATLARTPGIAMRLFTATERGLARPERLAARFAAKEAVAKVLGAPPGLEWHDTEVVLGTGGRPSLRIIGTVAAAAARLGIASWHLSLTHDGGVAVAMVVAET.

Residues Asp-9 and Glu-52 each coordinate Mg(2+).

Belongs to the P-Pant transferase superfamily. AcpS family. It depends on Mg(2+) as a cofactor.

The protein localises to the cytoplasm. It catalyses the reaction apo-[ACP] + CoA = holo-[ACP] + adenosine 3',5'-bisphosphate + H(+). Its function is as follows. Transfers the 4'-phosphopantetheine moiety from coenzyme A to a Ser of acyl-carrier-protein. The protein is Holo-[acyl-carrier-protein] synthase of Frankia casuarinae (strain DSM 45818 / CECT 9043 / HFP020203 / CcI3).